A 399-amino-acid chain; its full sequence is Carbamoyl phosphate synthase small chain (399 aa).

The interval 1-206 (MTQTIPSPKP…NKGYKTNNDA (206 aa)) is CPSase. Positions 60, 258, and 260 each coordinate L-glutamine. The Glutamine amidotransferase type-1 domain occupies 210–398 (HIVAIDYGIK…FNLIMDYKKT (189 aa)). Cys-287 acts as the Nucleophile in catalysis. The L-glutamine site is built by Leu-288, Gln-291, Asn-329, Gly-331, and Phe-332. Residues His-371 and Glu-373 contribute to the active site.

It belongs to the CarA family. In terms of assembly, composed of two chains; the small (or glutamine) chain promotes the hydrolysis of glutamine to ammonia, which is used by the large (or ammonia) chain to synthesize carbamoyl phosphate. Tetramer of heterodimers (alpha,beta)4.

It catalyses the reaction hydrogencarbonate + L-glutamine + 2 ATP + H2O = carbamoyl phosphate + L-glutamate + 2 ADP + phosphate + 2 H(+). It carries out the reaction L-glutamine + H2O = L-glutamate + NH4(+). The protein operates within amino-acid biosynthesis; L-arginine biosynthesis; carbamoyl phosphate from bicarbonate: step 1/1. Its pathway is pyrimidine metabolism; UMP biosynthesis via de novo pathway; (S)-dihydroorotate from bicarbonate: step 1/3. In terms of biological role, small subunit of the glutamine-dependent carbamoyl phosphate synthetase (CPSase). CPSase catalyzes the formation of carbamoyl phosphate from the ammonia moiety of glutamine, carbonate, and phosphate donated by ATP, constituting the first step of 2 biosynthetic pathways, one leading to arginine and/or urea and the other to pyrimidine nucleotides. The small subunit (glutamine amidotransferase) binds and cleaves glutamine to supply the large subunit with the substrate ammonia. The chain is Carbamoyl phosphate synthase small chain from Bartonella henselae (strain ATCC 49882 / DSM 28221 / CCUG 30454 / Houston 1) (Rochalimaea henselae).